The primary structure comprises 339 residues: Cathepsin L-like peptidase (339 aa).

The first 16 residues, Met1–Ala16, serve as a signal peptide directing secretion. Positions Val17 to Glu121 are cleaved as a propeptide — activation peptide. An N-linked (GlcNAc...) asparagine glycan is attached at Asn95. Cystine bridges form between Cys143-Cys186, Cys177-Cys219, and Cys278-Cys328. Cys146 is a catalytic residue. Catalysis depends on residues His285 and Asn306.

It belongs to the peptidase C1 family. As to quaternary structure, dimer of a heavy and a light chain linked by disulfide bonds. Interacts with cystatin; the interaction results in inhibition of cathepsin L-like peptidase activity. As to expression, salivary gland. Midgut.

It catalyses the reaction Specificity close to that of papain. As compared to cathepsin B, cathepsin L exhibits higher activity toward protein substrates, but has little activity on Z-Arg-Arg-NHMec, and no peptidyl-dipeptidase activity.. More active in the presence of a reducing agent DTT. In terms of biological role, proteinase exhibiting preference for Leu, Val and Phe residues at the P2 position. The protein is Cathepsin L-like peptidase of Aedes aegypti (Yellowfever mosquito).